The chain runs to 119 residues: C-C motif chemokine 24 (119 aa).

The signal sequence occupies residues 1 to 26 (MAGSATIVAGLLLLVACACCIFPIDS). 2 disulfide bridges follow: Cys-33–Cys-58 and Cys-34–Cys-74. Residues Asn-54 and Asn-115 are each glycosylated (N-linked (GlcNAc...) asparagine). A disordered region spans residues 96–119 (PSKGAKAVRTKFAVQRRRGNSTEV). The span at 101–119 (KAVRTKFAVQRRRGNSTEV) shows a compositional bias: basic residues.

The protein belongs to the intercrine beta (chemokine CC) family. As to expression, highest expression in jejunum and spleen. Lower levels found in liver and lung. No expression detected in kidney, thymus, brain or testis.

The protein resides in the secreted. Functionally, chemotactic for resting T-lymphocytes, and eosinophils. Has lower chemotactic activity for neutrophils but none for monocytes and activated lymphocytes. Is a strong suppressor of colony formation by a multipotential hematopoietic progenitor cell line. Binds to CCR3. The protein is C-C motif chemokine 24 of Mus musculus (Mouse).